Here is a 211-residue protein sequence, read N- to C-terminus: MRKLSFLDRVIEELDSYARFTKAPLNPSKKSPSSDTIDGKLSEVEKKHSAGLMRVDYTGEICAQGLYRGQASVAKSPQTKEHLYHAAAEEYDHLAWCGERLQELGARPSLLNPFWYWASFGIGAVAGSISDGLSYGFVVETEKQVMKHLDSHLKSLPMNDNRSREILKQMYIDESEHAVEAEKAGGKKLPKTVKAIMKLQSKVMTTLAYRF.

Fe cation is bound by residues Glu60, Glu90, His93, Glu142, Glu174, and His177.

The protein belongs to the COQ7 family. Requires Fe cation as cofactor.

The protein localises to the cell membrane. It carries out the reaction a 5-methoxy-2-methyl-3-(all-trans-polyprenyl)benzene-1,4-diol + AH2 + O2 = a 3-demethylubiquinol + A + H2O. The protein operates within cofactor biosynthesis; ubiquinone biosynthesis. Functionally, catalyzes the hydroxylation of 2-nonaprenyl-3-methyl-6-methoxy-1,4-benzoquinol during ubiquinone biosynthesis. The sequence is that of 3-demethoxyubiquinol 3-hydroxylase from Francisella tularensis subsp. novicida (strain U112).